We begin with the raw amino-acid sequence, 174 residues long: Transcription antitermination protein NusB (174 aa).

Residues Met-1–Arg-28 are disordered. Over residues Thr-16–Lys-25 the composition is skewed to basic and acidic residues.

The protein belongs to the NusB family.

Its function is as follows. Involved in transcription antitermination. Required for transcription of ribosomal RNA (rRNA) genes. Binds specifically to the boxA antiterminator sequence of the ribosomal RNA (rrn) operons. In Rhodopseudomonas palustris (strain BisB5), this protein is Transcription antitermination protein NusB.